The following is a 1053-amino-acid chain: Mediator of RNA polymerase II transcription subunit 16 (1053 aa).

The segment at 139-170 is disordered; it reads KTEGNTEKNKDTKQIGNGSGTNGHGDSPINTP. Over residues 142-151 the composition is skewed to basic and acidic residues; that stretch reads GNTEKNKDTK.

The protein belongs to the Mediator complex subunit 16 family. Component of the Mediator complex.

The protein localises to the nucleus. Functionally, component of the Mediator complex, a coactivator involved in the regulated transcription of nearly all RNA polymerase II-dependent genes. Mediator functions as a bridge to convey information from gene-specific regulatory proteins to the basal RNA polymerase II transcription machinery. Mediator is recruited to promoters by direct interactions with regulatory proteins and serves as a scaffold for the assembly of a functional preinitiation complex with RNA polymerase II and the general transcription factors. This is Mediator of RNA polymerase II transcription subunit 16 (SIN4) from Candida albicans (strain SC5314 / ATCC MYA-2876) (Yeast).